The following is a 303-amino-acid chain: N-acetyl-D-glucosamine kinase (303 aa).

ATP-binding positions include 4–11 (GFDIGGTK) and 133–140 (GVGGGLIF). Residues histidine 157, cysteine 177, cysteine 179, and cysteine 184 each contribute to the Zn(2+) site.

The protein belongs to the ROK (NagC/XylR) family. NagK subfamily.

It carries out the reaction N-acetyl-D-glucosamine + ATP = N-acetyl-D-glucosamine 6-phosphate + ADP + H(+). The protein operates within cell wall biogenesis; peptidoglycan recycling. Its function is as follows. Catalyzes the phosphorylation of N-acetyl-D-glucosamine (GlcNAc) derived from cell-wall degradation, yielding GlcNAc-6-P. The chain is N-acetyl-D-glucosamine kinase from Escherichia coli O157:H7.